The sequence spans 258 residues: Pimeloyl-[acyl-carrier protein] methyl ester esterase (258 aa).

One can recognise an AB hydrolase-1 domain in the interval 16–242 (LVLLHGWGLN…AAHAPFISHP (227 aa)). Substrate contacts are provided by residues Trp22, 82-83 (SM), and 143-147 (FLALQ). Residue Ser82 is the Nucleophile of the active site. Residues Asp207 and His235 contribute to the active site. His235 contacts substrate.

It belongs to the AB hydrolase superfamily. Carboxylesterase BioH family. Monomer.

Its subcellular location is the cytoplasm. The enzyme catalyses 6-carboxyhexanoyl-[ACP] methyl ester + H2O = 6-carboxyhexanoyl-[ACP] + methanol + H(+). It participates in cofactor biosynthesis; biotin biosynthesis. Its function is as follows. The physiological role of BioH is to remove the methyl group introduced by BioC when the pimeloyl moiety is complete. It allows to synthesize pimeloyl-ACP via the fatty acid synthetic pathway through the hydrolysis of the ester bonds of pimeloyl-ACP esters. This is Pimeloyl-[acyl-carrier protein] methyl ester esterase from Yersinia pseudotuberculosis serotype IB (strain PB1/+).